Consider the following 139-residue polypeptide: ATP synthase epsilon chain (139 aa).

Belongs to the ATPase epsilon chain family. In terms of assembly, F-type ATPases have 2 components, CF(1) - the catalytic core - and CF(0) - the membrane proton channel. CF(1) has five subunits: alpha(3), beta(3), gamma(1), delta(1), epsilon(1). CF(0) has three main subunits: a, b and c.

The protein resides in the cell inner membrane. Produces ATP from ADP in the presence of a proton gradient across the membrane. In Escherichia coli O157:H7, this protein is ATP synthase epsilon chain (atpC).